Reading from the N-terminus, the 317-residue chain is Bile salt hydrolase/transferase (317 aa).

Catalysis depends on C2, which acts as the Nucleophile; acyl-thioester intermediate. C2 and R18 together coordinate deoxycholate. N82 contacts taurine.

Belongs to the peptidase C59 family. Homotetramer. The tetramer consists of a dimer of dimers.

It catalyses the reaction glycocholate + H2O = cholate + glycine. The catalysed reaction is glycodeoxycholate + H2O = deoxycholate + glycine. The enzyme catalyses chenodeoxycholate + glycine = glycochenodeoxycholate + H2O. It carries out the reaction cholate + taurine = taurocholate + H2O. It catalyses the reaction taurodeoxycholate + H2O = deoxycholate + taurine. The catalysed reaction is taurochenodeoxycholate + H2O = chenodeoxycholate + taurine. The enzyme catalyses an L-alpha-amino acid + cholate = an N-choloyl-L-alpha-amino acid + H2O. It carries out the reaction an L-alpha-amino acid + taurocholate = an N-choloyl-L-alpha-amino acid + taurine. It catalyses the reaction cholate + L-alanine = L-alanocholate + H2O. The catalysed reaction is taurocholate + L-alanine = L-alanocholate + taurine. The enzyme catalyses cholate + L-serine = L-serocholate + H2O. It carries out the reaction taurocholate + L-serine = L-serocholate + taurine. It catalyses the reaction cholate + L-histidine = L-histidocholate + H2O. The catalysed reaction is taurocholate + L-histidine = L-histidocholate + taurine. Its pathway is lipid metabolism; bile acid biosynthesis. Its activity is regulated as follows. Hydrolase activity is competitively inhibited by the products cholate (CA) and deoxycholate (DCA), and by phenylacetate and 4-aminophenylacetate. Penicillin V and penicillin G show mixed inhibition. Strongly inhibited by thiol enzyme inhibitors in vitro. Functionally, possesses dual functions in bile acid metabolism. Acts as a bile salt hydrolase that catalyzes the deconjugation of glycine- and taurine-linked bile salts, which occurs naturally in the intestines of humans, releasing amino acid residues and deconjugated bile salts (bile acids). Can hydrolyze the amide bond in all six major human conjugated bile salts, namely glycocholate (GCA), glycodeoxycholate (GDCA), glycochenodeoxycholate (GCDCA), taurocholate (TCA), taurodeoxycholate (TDCA) and taurochenodeoxycholate (TCDCA). Shows a slight preference for glycine-conjugated bile acids as substrates. Also acts as an amine N-acyltransferase that conjugates a wide variety of amino acids to conjugated and non-conjugated bile acids, thus producing bacterial bile acid amidates (BBAAs) - also named microbially conjugated bile acids (MCBAs) - in the gastrointestinal tract. These BBAAs may facilitate communication between the microbiota and host through the activation of human ligand-activated transcription factors. Is totally inactive toward penicillin V. This chain is Bile salt hydrolase/transferase, found in Bifidobacterium longum.